The primary structure comprises 305 residues: Ribonuclease BN (305 aa).

Zn(2+) contacts are provided by histidine 64, histidine 66, aspartate 68, histidine 69, histidine 141, aspartate 212, and histidine 270. Catalysis depends on aspartate 68, which acts as the Proton acceptor.

Belongs to the RNase Z family. RNase BN subfamily. In terms of assembly, homodimer. It depends on Zn(2+) as a cofactor.

Functionally, zinc phosphodiesterase, which has both exoribonuclease and endoribonuclease activities. This is Ribonuclease BN from Escherichia coli O45:K1 (strain S88 / ExPEC).